We begin with the raw amino-acid sequence, 250 residues long: 2-(R)-hydroxypropyl-CoM dehydrogenase (250 aa).

Residues 12 to 14, aspartate 33, 60 to 61, and asparagine 87 each bind NAD(+); these read SGN and DV. Arginine 152 lines the 2-oxopropyl-coenzyme M pocket. Catalysis depends on tyrosine 155, which acts as the Proton acceptor. 188–192 is an NAD(+) binding site; sequence IETPM. Residue 195 to 196 participates in 2-oxopropyl-coenzyme M binding; that stretch reads WR.

The protein belongs to the short-chain dehydrogenases/reductases (SDR) family. Homodimer in solution. Homotetramer. Component III of the aliphatic epoxide carboxylation complex together with components I, II and IV.

The catalysed reaction is (R)-2-hydroxypropyl-coenzyme M + NAD(+) = 2-oxopropyl-coenzyme M + NADH + H(+). It functions in the pathway alkene metabolism; propylene degradation. Inhibited by the arginine-specific modifiers 2,3-butanedione and phenylglyoxal. 2-(2-methyl-2-hydroxypropylthio)ethanesulfonate (M-HPC), an achiral analog of both R-HPC and S-HPC, and (2S)-2-hydroxypropyl-coenzyme M (S-HPC) are competitive inhibitors. Inhibited (at 70%) by the coenzyme M analog 2-bromoethanesulfonate (BES). Its function is as follows. Involved in aliphatic epoxide carboxylation. Catalyzes the reversible oxidation of (R)-2-hydroxypropyl-coenzyme M (R-HPC) to 2-oxopropyl-coenzyme M (2-KPC). The enzyme is highly specific for the R enantiomers. In vitro can also use achiral 2-propanol and short-chain (R)- and (S)-2-alkanols. This Xanthobacter autotrophicus (strain ATCC BAA-1158 / Py2) protein is 2-(R)-hydroxypropyl-CoM dehydrogenase.